We begin with the raw amino-acid sequence, 114 residues long: T cell receptor beta variable 4-1 (114 aa).

An N-terminal signal peptide occupies residues Met1–Thr21. The Ig-like domain maps to Glu22–Gln114. Cysteines 42 and 110 form a disulfide. N-linked (GlcNAc...) asparagine glycans are attached at residues Asn76 and Asn89.

Alpha-beta TR is a heterodimer composed of an alpha and beta chain; disulfide-linked. The alpha-beta TR is associated with the transmembrane signaling CD3 coreceptor proteins to form the TR-CD3 (TcR or TCR). The assembly of alpha-beta TR heterodimers with CD3 occurs in the endoplasmic reticulum where a single alpha-beta TR heterodimer associates with one CD3D-CD3E heterodimer, one CD3G-CD3E heterodimer and one CD247 homodimer forming a stable octameric structure. CD3D-CD3E and CD3G-CD3E heterodimers preferentially associate with TR alpha and TR beta chains, respectively. The association of the CD247 homodimer is the last step of TcR assembly in the endoplasmic reticulum and is required for transport to the cell surface.

It is found in the cell membrane. In terms of biological role, v region of the variable domain of T cell receptor (TR) beta chain that participates in the antigen recognition. Alpha-beta T cell receptors are antigen specific receptors which are essential to the immune response and are present on the cell surface of T lymphocytes. Recognize peptide-major histocompatibility (MH) (pMH) complexes that are displayed by antigen presenting cells (APC), a prerequisite for efficient T cell adaptive immunity against pathogens. Binding of alpha-beta TR to pMH complex initiates TR-CD3 clustering on the cell surface and intracellular activation of LCK that phosphorylates the ITAM motifs of CD3G, CD3D, CD3E and CD247 enabling the recruitment of ZAP70. In turn ZAP70 phosphorylates LAT, which recruits numerous signaling molecules to form the LAT signalosome. The LAT signalosome propagates signal branching to three major signaling pathways, the calcium, the mitogen-activated protein kinase (MAPK) kinase and the nuclear factor NF-kappa-B (NF-kB) pathways, leading to the mobilization of transcription factors that are critical for gene expression and essential for T cell growth and differentiation. The T cell repertoire is generated in the thymus, by V-(D)-J rearrangement. This repertoire is then shaped by intrathymic selection events to generate a peripheral T cell pool of self-MH restricted, non-autoaggressive T cells. Post-thymic interaction of alpha-beta TR with the pMH complexes shapes TR structural and functional avidity. The protein is T cell receptor beta variable 4-1 of Homo sapiens (Human).